Here is a 92-residue protein sequence, read N- to C-terminus: UPF0223 protein SP_1404 (92 aa).

Belongs to the UPF0223 family.

This chain is UPF0223 protein SP_1404, found in Streptococcus pneumoniae serotype 4 (strain ATCC BAA-334 / TIGR4).